We begin with the raw amino-acid sequence, 104 residues long: uncharacterized protein (104 aa).

The tract at residues 62 to 92 (SSPAASSHPRKRGKEKKERTPTERLAAPARK) is disordered.

This is an uncharacterized protein from Human adenovirus B serotype 7 (HAdV-7).